A 467-amino-acid polypeptide reads, in one-letter code: Nuclear distribution protein nudF (467 aa).

In terms of domain architecture, LisH spans Gln-9–Val-41. Positions Thr-60–Thr-87 form a coiled coil. WD repeat units follow at residues Gly-113–Lys-154, His-156–Arg-196, Gly-200–Thr-247, Gly-250–Thr-289, Gly-292–Leu-352, Gly-354–Arg-393, Ala-398–Pro-428, and Ala-429–Ala-466. Residues Gly-417–Pro-439 form a disordered region. The span at Ala-422–Gly-436 shows a compositional bias: polar residues.

Belongs to the WD repeat LIS1/nudF family. Self-associates. Interacts with nudE and dynein.

Its subcellular location is the cytoplasm. The protein resides in the cytoskeleton. It is found in the spindle pole. Positively regulates the activity of the minus-end directed microtubule motor protein dynein. May enhance dynein-mediated microtubule sliding by targeting dynein to the microtubule plus end. Required for nuclear migration during vegetative growth as well as development. Required for retrograde early endosome (EE) transport from the hyphal tip. Required for localization of dynein to the mitotic spindle poles. Recruits additional proteins to the dynein complex at SPBs. This is Nuclear distribution protein nudF from Aspergillus fumigatus (strain CBS 144.89 / FGSC A1163 / CEA10) (Neosartorya fumigata).